The following is a 423-amino-acid chain: Adenylosuccinate synthetase (423 aa).

Residues G12 to K18 and G40 to T42 contribute to the GTP site. D13 serves as the catalytic Proton acceptor. Residues D13 and G40 each contribute to the Mg(2+) site. Residues D13–K16, N38–H41, T128, R142, Q223, T238, and R302 each bind IMP. The active-site Proton donor is H41. Position 298–304 (T298–R304) interacts with substrate. GTP contacts are provided by residues R304, R330 to D332, and C412 to G414.

The protein belongs to the adenylosuccinate synthetase family. In terms of assembly, homodimer. Mg(2+) is required as a cofactor.

It localises to the cytoplasm. The catalysed reaction is IMP + L-aspartate + GTP = N(6)-(1,2-dicarboxyethyl)-AMP + GDP + phosphate + 2 H(+). Its pathway is purine metabolism; AMP biosynthesis via de novo pathway; AMP from IMP: step 1/2. Functionally, plays an important role in the de novo pathway of purine nucleotide biosynthesis. Catalyzes the first committed step in the biosynthesis of AMP from IMP. The polypeptide is Adenylosuccinate synthetase (Dehalococcoides mccartyi (strain ATCC BAA-2100 / JCM 16839 / KCTC 5957 / BAV1)).